The chain runs to 445 residues: UDP-N-acetylmuramoylalanine--D-glutamate ligase (445 aa).

117–123 (GSNGKTT) contributes to the ATP binding site.

This sequence belongs to the MurCDEF family.

The protein localises to the cytoplasm. The catalysed reaction is UDP-N-acetyl-alpha-D-muramoyl-L-alanine + D-glutamate + ATP = UDP-N-acetyl-alpha-D-muramoyl-L-alanyl-D-glutamate + ADP + phosphate + H(+). Its pathway is cell wall biogenesis; peptidoglycan biosynthesis. Cell wall formation. Catalyzes the addition of glutamate to the nucleotide precursor UDP-N-acetylmuramoyl-L-alanine (UMA). The sequence is that of UDP-N-acetylmuramoylalanine--D-glutamate ligase from Neisseria meningitidis serogroup A / serotype 4A (strain DSM 15465 / Z2491).